Consider the following 252-residue polypeptide: Putative pinene synthase (252 aa).

Belongs to the terpene synthase family. Tpsa subfamily.

The polypeptide is Putative pinene synthase (Fragaria ananassa (Strawberry)).